We begin with the raw amino-acid sequence, 578 residues long: Lysine--tRNA ligase (578 aa).

Mg(2+) is bound by residues E414 and E421.

The protein belongs to the class-II aminoacyl-tRNA synthetase family. As to quaternary structure, homodimer. Mg(2+) serves as cofactor.

It is found in the cytoplasm. It catalyses the reaction tRNA(Lys) + L-lysine + ATP = L-lysyl-tRNA(Lys) + AMP + diphosphate. This Porphyromonas gingivalis (strain ATCC 33277 / DSM 20709 / CIP 103683 / JCM 12257 / NCTC 11834 / 2561) protein is Lysine--tRNA ligase.